A 1265-amino-acid chain; its full sequence is Stromal processing peptidase, chloroplastic (1265 aa).

Residues 1-143 (MASSSSSIFT…SLRKHSQIVN (143 aa)) constitute a chloroplast transit peptide. A Zn(2+)-binding site is contributed by H240. The Proton acceptor role is filled by E243. A Zn(2+)-binding site is contributed by H244. E314 is an active-site residue. E321 contacts Zn(2+).

This sequence belongs to the peptidase M16 family. Zn(2+) serves as cofactor.

The protein localises to the plastid. It localises to the chloroplast stroma. Its function is as follows. Cleaves presequences (transit peptides) from chloroplastic protein precursors. Initially recognizes a precursor by binding to the C-terminus of its transit peptide and then removes the transit peptide in a single endoproteolytic step. In a next step, pursues the cleavage of transit peptide to a subfragment form. The polypeptide is Stromal processing peptidase, chloroplastic (Arabidopsis thaliana (Mouse-ear cress)).